A 304-amino-acid chain; its full sequence is C-type lectin domain-containing protein 141 (304 aa).

The N-terminal stretch at 1–19 (MRSSSTLLIAFGLFLASMS) is a signal peptide. The interval 29-100 (GSGGHRPPSS…TTPEPTTTKV (72 aa)) is disordered. A compositionally biased stretch (low complexity) spans 51 to 99 (TKPPKSTSTPSTSTSTPTTTTTTTTTTTTTPTTTTTTTTTTTPEPTTTK).

The protein is C-type lectin domain-containing protein 141 (clec-141) of Caenorhabditis elegans.